A 279-amino-acid polypeptide reads, in one-letter code: Undecaprenyl-diphosphatase (279 aa).

Transmembrane regions (helical) follow at residues 2–22 (LIIELLKAIFFGIIEGITEWL), 44–64 (AFIEMFNIVIQLGAIIAVMLI), 85–105 (WQLWLKVVIACIPSILIAVPL), 113–133 (FYFMVPIAIALIVYGIAFIWI), 163–183 (VLSIVPGTSRSGATILGAIIL), 188–208 (TVAADFTFFLAIPTMFGYSGL), 223–243 (AQVLILLVASLTAFVVSLLAI), and 255–275 (FTIFGKYRIVLGSLLLIYSFF).

This sequence belongs to the UppP family.

The protein localises to the cell membrane. The catalysed reaction is di-trans,octa-cis-undecaprenyl diphosphate + H2O = di-trans,octa-cis-undecaprenyl phosphate + phosphate + H(+). Its function is as follows. Catalyzes the dephosphorylation of undecaprenyl diphosphate (UPP). Confers resistance to bacitracin. The sequence is that of Undecaprenyl-diphosphatase from Streptococcus pyogenes serotype M12 (strain MGAS2096).